The primary structure comprises 576 residues: Arginine--tRNA ligase (576 aa).

The short motif at 126–136 (ANPTGPMHIGH) is the 'HIGH' region element.

Belongs to the class-I aminoacyl-tRNA synthetase family. In terms of assembly, monomer.

The protein localises to the cytoplasm. It catalyses the reaction tRNA(Arg) + L-arginine + ATP = L-arginyl-tRNA(Arg) + AMP + diphosphate. The chain is Arginine--tRNA ligase from Rickettsia rickettsii (strain Iowa).